The following is a 258-amino-acid chain: UPF0246 protein CJA_0191 (258 aa).

This sequence belongs to the UPF0246 family.

The protein is UPF0246 protein CJA_0191 of Cellvibrio japonicus (strain Ueda107) (Pseudomonas fluorescens subsp. cellulosa).